The chain runs to 336 residues: MNAPRLTDTTLRDGSHAMRHMFTRQHVRDIVTALDRAGVPVIEVTHGDGLAGSSLQYGFSFVSDLDLIAEARESAERARIAALLLPGIGTRRELKAAVERGVQVLRIATQCTEADISEEHFKMAKDMGLETVGFLMMSHMRSPEFLAEQALLMESYGADCVYVVDSAGAMLPRDAAARVRALKDTLRVQVGFHAHNNLGLGIGNTLAALEAGADQIDGCLRGLGAGAGNAATELLAAVLDRLGVNPGLDVLALMDAAEYVVAPIMPFQPFPDRDAITIGYAGVYSTFLLHAKRVGEQLGVDPRAILIELGRRQTVAGQEDWILDVALELVRKRERA.

The region spanning 4-254 (PRLTDTTLRD…NPGLDVLALM (251 aa)) is the Pyruvate carboxyltransferase domain. Substrate is bound at residue 12–13 (RD). Residue Asp-13 participates in Mn(2+) binding. His-16 functions as the Proton acceptor in the catalytic mechanism. Substrate-binding residues include Ser-166 and His-193. Mn(2+) is bound by residues His-193 and His-195. A substrate-binding site is contributed by Tyr-284.

This sequence belongs to the 4-hydroxy-2-oxovalerate aldolase family.

The catalysed reaction is (S)-4-hydroxy-2-oxopentanoate = acetaldehyde + pyruvate. The sequence is that of 4-hydroxy-2-oxovalerate aldolase from Roseiflexus castenholzii (strain DSM 13941 / HLO8).